A 391-amino-acid polypeptide reads, in one-letter code: uncharacterized protein (391 aa).

This sequence belongs to the mycobacterial PPE family.

This is an uncharacterized protein from Mycobacterium tuberculosis (strain CDC 1551 / Oshkosh).